The chain runs to 340 residues: Phosphoribosylformylglycinamidine cyclo-ligase (340 aa).

The protein belongs to the AIR synthase family.

It localises to the cytoplasm. It catalyses the reaction 2-formamido-N(1)-(5-O-phospho-beta-D-ribosyl)acetamidine + ATP = 5-amino-1-(5-phospho-beta-D-ribosyl)imidazole + ADP + phosphate + H(+). Its pathway is purine metabolism; IMP biosynthesis via de novo pathway; 5-amino-1-(5-phospho-D-ribosyl)imidazole from N(2)-formyl-N(1)-(5-phospho-D-ribosyl)glycinamide: step 2/2. The sequence is that of Phosphoribosylformylglycinamidine cyclo-ligase from Streptococcus pyogenes serotype M12 (strain MGAS2096).